The sequence spans 240 residues: Small ribosomal subunit protein uS3 (240 aa).

The KH type-2 domain maps to 39-107; that stretch reads IREFIKEECK…ELHLNIVEVR (69 aa). A compositionally biased stretch (basic and acidic residues) spans 212–222; sequence PQARDRRHAEL. A disordered region spans residues 212–240; the sequence is PQARDRRHAELQEGGGPRPQGGGRPRRDR. Over residues 224-234 the composition is skewed to gly residues; the sequence is EGGGPRPQGGG.

Belongs to the universal ribosomal protein uS3 family. As to quaternary structure, part of the 30S ribosomal subunit. Forms a tight complex with proteins S10 and S14.

Binds the lower part of the 30S subunit head. Binds mRNA in the 70S ribosome, positioning it for translation. This Dinoroseobacter shibae (strain DSM 16493 / NCIMB 14021 / DFL 12) protein is Small ribosomal subunit protein uS3.